The following is a 488-amino-acid chain: Cobyric acid synthase (488 aa).

The region spanning arginine 252 to phenylalanine 442 is the GATase cobBQ-type domain. Cysteine 334 serves as the catalytic Nucleophile. Residue histidine 434 is part of the active site.

This sequence belongs to the CobB/CobQ family. CobQ subfamily.

The protein operates within cofactor biosynthesis; adenosylcobalamin biosynthesis. Functionally, catalyzes amidations at positions B, D, E, and G on adenosylcobyrinic A,C-diamide. NH(2) groups are provided by glutamine, and one molecule of ATP is hydrogenolyzed for each amidation. This Xanthobacter autotrophicus (strain ATCC BAA-1158 / Py2) protein is Cobyric acid synthase.